A 291-amino-acid chain; its full sequence is Diaminopimelate epimerase (291 aa).

Residues N13, Q46, and N66 each contribute to the substrate site. Catalysis depends on C75, which acts as the Proton donor. Residues 76–77, N170, N203, and 221–222 contribute to the substrate site; these read GN and ER. The Proton acceptor role is filled by C230. 231–232 is a binding site for substrate; the sequence is GS.

Belongs to the diaminopimelate epimerase family. Homodimer.

The protein resides in the cytoplasm. The catalysed reaction is (2S,6S)-2,6-diaminopimelate = meso-2,6-diaminopimelate. Its pathway is amino-acid biosynthesis; L-lysine biosynthesis via DAP pathway; DL-2,6-diaminopimelate from LL-2,6-diaminopimelate: step 1/1. In terms of biological role, catalyzes the stereoinversion of LL-2,6-diaminopimelate (L,L-DAP) to meso-diaminopimelate (meso-DAP), a precursor of L-lysine and an essential component of the bacterial peptidoglycan. The polypeptide is Diaminopimelate epimerase (Albidiferax ferrireducens (strain ATCC BAA-621 / DSM 15236 / T118) (Rhodoferax ferrireducens)).